The chain runs to 510 residues: Cytochrome P450 4A6 (510 aa).

A propeptide spanning residues methionine 1–serine 4 is cleaved from the precursor. The heme site is built by glutamate 321 and cysteine 457.

It belongs to the cytochrome P450 family. The cofactor is heme. Liver; kidney.

Its subcellular location is the endoplasmic reticulum membrane. It localises to the microsome membrane. It carries out the reaction an omega-methyl-long-chain fatty acid + reduced [NADPH--hemoprotein reductase] + O2 = an omega-hydroxy-long-chain fatty acid + oxidized [NADPH--hemoprotein reductase] + H2O + H(+). In terms of biological role, cytochromes P450 are a group of heme-thiolate monooxygenases. In liver microsomes, this enzyme is involved in an NADPH-dependent electron transport pathway. It oxidizes a variety of structurally unrelated compounds, including steroids, fatty acids, and xenobiotics. Functionally, the kidney P-450 system is rather specialized for the omega-hydroxylation of fatty acids. Both P450-KA1 and P450-KA2 catalyze the omega- and (omega-1)-hydroxylation of various fatty acids with no drug-metabolizing activity, and hydroxylate prostaglandin A1 and A2 solely at the omega-position. This chain is Cytochrome P450 4A6 (CYP4A6), found in Oryctolagus cuniculus (Rabbit).